The sequence spans 528 residues: FAD-dependent monooxygenase DEP2 (528 aa).

The first 23 residues, 1–23, serve as a signal peptide directing secretion; it reads MEDGRSTFKVIIIGAGVTGLTLA. FAD-binding residues include D37, R110, D311, and G324. A helical membrane pass occupies residues 479 to 499; sequence VFPQILGVLMVMWSSVWLFHL. N521 carries an N-linked (GlcNAc...) asparagine glycan.

This sequence belongs to the paxM FAD-dependent monooxygenase family. Requires FAD as cofactor.

Its subcellular location is the membrane. It participates in polyketide biosynthesis. In terms of biological role, FAD-dependent monooxygenase; part of the gene cluster that mediates the biosynthesis of depudecin, a highly oxidized eleven-carbon linear polyketide that acts as a histone deacetylase (HDAC) inhibitor and makes a small contribution to pathogenesis. The reducing polyketide synthase DEP5 is the central enzyme in depudecin biosynthesis by yielding the backbone polyketide chain. The monooxygenases DEP2 and DEP4, as well as the uncharacterized protein DEP1, then act as tailoring enzymes to modify the intermediate polyketide chain into depudecin. The sequence is that of FAD-dependent monooxygenase DEP2 from Alternaria brassicicola (Dark leaf spot agent).